A 677-amino-acid polypeptide reads, in one-letter code: Methionine--tRNA ligase (677 aa).

The short motif at 15–25 is the 'HIGH' region element; that stretch reads PYANGSIHLGH. The Zn(2+) site is built by C146, C149, C159, and C162. A 'KMSKS' region motif is present at residues 333-337; it reads KMSKS. K336 contacts ATP. The region spanning 575-677 is the tRNA-binding domain; sequence DFAKVDLRVA…AGAKPGHQVK (103 aa).

This sequence belongs to the class-I aminoacyl-tRNA synthetase family. MetG type 1 subfamily. As to quaternary structure, homodimer. Zn(2+) serves as cofactor.

The protein localises to the cytoplasm. The enzyme catalyses tRNA(Met) + L-methionine + ATP = L-methionyl-tRNA(Met) + AMP + diphosphate. In terms of biological role, is required not only for elongation of protein synthesis but also for the initiation of all mRNA translation through initiator tRNA(fMet) aminoacylation. This chain is Methionine--tRNA ligase, found in Escherichia coli O81 (strain ED1a).